Reading from the N-terminus, the 331-residue chain is L-lactate dehydrogenase A chain (331 aa).

Residues 29 to 57 (GMVG…MEDK) and R98 each bind NAD(+). 3 residues coordinate substrate: R105, N137, and R168. N137 contacts NAD(+). The Proton acceptor role is filled by H192. Position 247 (T247) interacts with substrate.

Belongs to the LDH/MDH superfamily. LDH family. Homotetramer.

The protein resides in the cytoplasm. The catalysed reaction is (S)-lactate + NAD(+) = pyruvate + NADH + H(+). The protein operates within fermentation; pyruvate fermentation to lactate; (S)-lactate from pyruvate: step 1/1. Functionally, interconverts simultaneously and stereospecifically pyruvate and lactate with concomitant interconversion of NADH and NAD(+). The protein is L-lactate dehydrogenase A chain (ldha) of Notothenia angustata (Rockcod).